A 160-amino-acid polypeptide reads, in one-letter code: Cytochrome b6-f complex subunit 4 (160 aa).

Transmembrane regions (helical) follow at residues 36 to 56 (LLYIFPVVILGTIACTVGLAV), 95 to 115 (LLGVLLMAAVPAGLLTVPFLE), and 131 to 151 (TVFLIGTVVALWLGIGAALPI).

This sequence belongs to the cytochrome b family. PetD subfamily. The 4 large subunits of the cytochrome b6-f complex are cytochrome b6, subunit IV (17 kDa polypeptide, petD), cytochrome f and the Rieske protein, while the 4 small subunits are petG, petL, petM and petN. The complex functions as a dimer.

Its subcellular location is the plastid. The protein resides in the chloroplast thylakoid membrane. Functionally, component of the cytochrome b6-f complex, which mediates electron transfer between photosystem II (PSII) and photosystem I (PSI), cyclic electron flow around PSI, and state transitions. This chain is Cytochrome b6-f complex subunit 4, found in Marchantia polymorpha (Common liverwort).